We begin with the raw amino-acid sequence, 157 residues long: Protein Smg homolog (157 aa).

Belongs to the Smg family.

This chain is Protein Smg homolog, found in Shewanella putrefaciens (strain CN-32 / ATCC BAA-453).